The sequence spans 147 residues: Phosphoribosyl-AMP cyclohydrolase (147 aa).

Position 91 (Asp-91) interacts with Mg(2+). Cys-92 lines the Zn(2+) pocket. Mg(2+)-binding residues include Asp-93 and Asp-95. Zn(2+)-binding residues include Cys-108 and Cys-115.

The protein belongs to the PRA-CH family. In terms of assembly, homodimer. It depends on Mg(2+) as a cofactor. The cofactor is Zn(2+).

Its subcellular location is the cytoplasm. The catalysed reaction is 1-(5-phospho-beta-D-ribosyl)-5'-AMP + H2O = 1-(5-phospho-beta-D-ribosyl)-5-[(5-phospho-beta-D-ribosylamino)methylideneamino]imidazole-4-carboxamide. It functions in the pathway amino-acid biosynthesis; L-histidine biosynthesis; L-histidine from 5-phospho-alpha-D-ribose 1-diphosphate: step 3/9. Catalyzes the hydrolysis of the adenine ring of phosphoribosyl-AMP. The polypeptide is Phosphoribosyl-AMP cyclohydrolase (Rhodopseudomonas palustris (strain BisB5)).